Consider the following 1974-residue polypeptide: Protein Ycf2 (1974 aa).

Positions 219–246 (SQLKGSSYQSRDHLDSISNEDSEYHNQR) are disordered. Position 1308 to 1315 (1308 to 1315 (GSIGTGRS)) interacts with ATP.

This sequence belongs to the Ycf2 family.

The protein localises to the plastid. It localises to the chloroplast stroma. Its function is as follows. Probable ATPase of unknown function. Its presence in a non-photosynthetic plant (Epifagus virginiana) and experiments in tobacco indicate that it has an essential function which is probably not related to photosynthesis. This Jasminum nudiflorum (Winter jasmine) protein is Protein Ycf2.